Here is a 224-residue protein sequence, read N- to C-terminus: Peptidyl-prolyl cis-trans isomerase FKBP3 (224 aa).

Ala-2 is modified (N-acetylalanine). Position 36 is a phosphoserine (Ser-36). The tract at residues Val-88–Lys-118 is disordered. Basic and acidic residues predominate over residues Lys-89–Glu-102. The residue at position 99 (Lys-99) is an N6-acetyllysine. The region spanning Gly-128–Asp-224 is the PPIase FKBP-type domain. The residue at position 152 (Ser-152) is a Phosphoserine. Lys-170 carries the post-translational modification N6-acetyllysine.

Belongs to the FKBP-type PPIase family.

The protein resides in the nucleus. It carries out the reaction [protein]-peptidylproline (omega=180) = [protein]-peptidylproline (omega=0). Its activity is regulated as follows. Inhibited preferentially by rapamycin over FK506. Functionally, FK506- and rapamycin-binding proteins (FKBPs) constitute a family of receptors for the two immunosuppressants which inhibit T-cell proliferation by arresting two distinct cytoplasmic signal transmission pathways. PPIases accelerate the folding of proteins. The chain is Peptidyl-prolyl cis-trans isomerase FKBP3 (Fkbp3) from Mus musculus (Mouse).